We begin with the raw amino-acid sequence, 291 residues long: MELSEITRSTLVSTLSRLLRRHKESNPDFFLIRSKMFIGGLSWDTSKKDLTEYLSRFGEVLDCTIKTDPVTGRSRGFGFVLFKDAVSVDKVLETKEHKLDGKLIDPKRAKALQGKEPPKKVFVGGLSPETTEEQIKQYFGGFGEIENIELPMDTKTNERRGFCFVTYTDEEPVQKLLESRFHQIGTGKCEIKAAQPKEVYRQQQQKQQKGGRGGTRGRGRGQGYSNYYDQNYGGYGNNDSYGDQGYGGYDYSGYNYGNYGYNQGYTDYSGQQSTYGKARGGGNHQNNYQPY.

RRM domains lie at 34–116 (SKMF…QGKE) and 119–196 (KKVF…AAQP). The interval 196 to 226 (PKEVYRQQQQKQQKGGRGGTRGRGRGQGYSN) is disordered. Over residues 210-222 (GGRGGTRGRGRGQ) the composition is skewed to gly residues.

Its subcellular location is the nucleus. It localises to the cytoplasm. Its function is as follows. Acts as a transcriptional regulator. Binds DNA and RNA. The polypeptide is Heterogeneous nuclear ribonucleoprotein D-like-B (hnrnpdl-b) (Xenopus laevis (African clawed frog)).